Consider the following 332-residue polypeptide: Isopentenyl phosphate kinase (332 aa).

N-acetylmethionine is present on Met-1. 18 to 22 (KLGGA) is an ATP binding site. Ala-96 lines the substrate pocket. Gly-97 lines the ATP pocket. Positions 101 and 202 each coordinate substrate. Residues Asp-223, 228 to 233 (YDRPPS), Gly-279, and Lys-283 each bind ATP.

Belongs to the isopentenyl phosphate kinase family.

The protein localises to the cytoplasm. The protein resides in the cytosol. The catalysed reaction is isopentenyl phosphate + ATP = isopentenyl diphosphate + ADP. Its function is as follows. Catalyzes the formation of isopentenyl diphosphate (IPP), the universal five-carbon isoprenoid building block of all natural isoprenoids. Acts in parallel with the mevalonate (MVA) pathway and plays an important role in regulating the formation of both MVA and methylerythritol phosphate (MEP) pathway-derived terpenoid compounds by controlling the ratio of isopentenyl phosphate (IP) and dimethylallyl phosphate (DMAP) to isopentenyl diphosphate (IPP) and dimethylallyl diphosphate (DMAPP). Controls the levels of IP and DMAP that are competitive inhibitors of the farnesyl diphosphate synthase. Regulates the production of farnesyl diphosphate-derived terpenoids in the cytosol, and geranyl diphosphate-derived compounds in plastids. In Arabidopsis thaliana (Mouse-ear cress), this protein is Isopentenyl phosphate kinase.